A 294-amino-acid chain; its full sequence is Ribosomal RNA small subunit methyltransferase H (294 aa).

Residues 40–42 (GGH), aspartate 59, phenylalanine 86, aspartate 102, and glutamine 109 contribute to the S-adenosyl-L-methionine site.

Belongs to the methyltransferase superfamily. RsmH family.

Its subcellular location is the cytoplasm. It catalyses the reaction cytidine(1402) in 16S rRNA + S-adenosyl-L-methionine = N(4)-methylcytidine(1402) in 16S rRNA + S-adenosyl-L-homocysteine + H(+). Specifically methylates the N4 position of cytidine in position 1402 (C1402) of 16S rRNA. The sequence is that of Ribosomal RNA small subunit methyltransferase H from Cyanothece sp. (strain PCC 7425 / ATCC 29141).